The primary structure comprises 333 residues: DNA-directed RNA polymerase subunit alpha (333 aa).

The interval 1–235 (MQTNLLKPKA…EQLAVFAQLE (235 aa)) is alpha N-terminal domain (alpha-NTD). The alpha C-terminal domain (alpha-CTD) stretch occupies residues 253-333 (FDPILLRPVD…NWPPQGLDKR (81 aa)).

This sequence belongs to the RNA polymerase alpha chain family. Homodimer. The RNAP catalytic core consists of 2 alpha, 1 beta, 1 beta' and 1 omega subunit. When a sigma factor is associated with the core the holoenzyme is formed, which can initiate transcription.

The enzyme catalyses RNA(n) + a ribonucleoside 5'-triphosphate = RNA(n+1) + diphosphate. Functionally, DNA-dependent RNA polymerase catalyzes the transcription of DNA into RNA using the four ribonucleoside triphosphates as substrates. The protein is DNA-directed RNA polymerase subunit alpha of Methylibium petroleiphilum (strain ATCC BAA-1232 / LMG 22953 / PM1).